The primary structure comprises 278 residues: Orotidine 5'-phosphate decarboxylase (278 aa).

The active-site Proton donor is the Lys95.

The protein belongs to the OMP decarboxylase family. Type 2 subfamily.

The catalysed reaction is orotidine 5'-phosphate + H(+) = UMP + CO2. It participates in pyrimidine metabolism; UMP biosynthesis via de novo pathway; UMP from orotate: step 2/2. The chain is Orotidine 5'-phosphate decarboxylase from Mycobacterium ulcerans (strain Agy99).